Consider the following 557-residue polypeptide: Ribonuclease J 2 (557 aa).

4 residues coordinate Zn(2+): His76, His78, His144, and Glu166. 366-370 (HASSH) contacts substrate.

It belongs to the metallo-beta-lactamase superfamily. RNA-metabolizing metallo-beta-lactamase-like family. Bacterial RNase J subfamily. As to quaternary structure, homodimer, may be a subunit of the RNA degradosome. Zn(2+) serves as cofactor.

The protein resides in the cytoplasm. Its function is as follows. An RNase that has 5'-3' exonuclease and possibly endoonuclease activity. Involved in maturation of rRNA and in some organisms also mRNA maturation and/or decay. In Staphylococcus aureus (strain MRSA252), this protein is Ribonuclease J 2.